A 66-amino-acid polypeptide reads, in one-letter code: Large ribosomal subunit protein bL35 (66 aa).

The span at 1–16 shows a compositional bias: basic residues; that stretch reads MPKQKTHRASAKRFKR. The interval 1-21 is disordered; that stretch reads MPKQKTHRASAKRFKRTGSGG.

Belongs to the bacterial ribosomal protein bL35 family.

The polypeptide is Large ribosomal subunit protein bL35 (Streptococcus gordonii (strain Challis / ATCC 35105 / BCRC 15272 / CH1 / DL1 / V288)).